The sequence spans 127 residues: uncharacterized protein (127 aa).

Helical transmembrane passes span 16–36 (AVIG…CYVI), 59–79 (LVGA…SFLF), and 100–120 (IIGF…GGVI).

The protein localises to the cell membrane. This is an uncharacterized protein from Methanocaldococcus jannaschii (strain ATCC 43067 / DSM 2661 / JAL-1 / JCM 10045 / NBRC 100440) (Methanococcus jannaschii).